We begin with the raw amino-acid sequence, 259 residues long: Complement factor D (259 aa).

An N-terminal signal peptide occupies residues methionine 1–alanine 21. The propeptide at glutamine 22 to arginine 26 is activation peptide. Positions isoleucine 27 to alanine 254 constitute a Peptidase S1 domain. Residues cysteine 52 and cysteine 68 are joined by a disulfide bond. Catalysis depends on charge relay system residues histidine 67 and aspartate 115. Intrachain disulfides connect cysteine 149-cysteine 215, cysteine 180-cysteine 196, and cysteine 205-cysteine 230. Residue serine 209 is the Charge relay system of the active site. Positions threonine 224–arginine 228 are self-inhibitor loop.

It belongs to the peptidase S1 family. Post-translationally, CFD is activated by the removal of 5 residues at the N-terminus, named activation peptide, by the MASP-3 isoform of MASP1.

It localises to the secreted. The enzyme catalyses Selective cleavage of Arg-|-Lys bond in complement factor B when in complex with complement subcomponent C3b or with cobra venom factor.. With respect to regulation, circulates in plasma in a mature but self-inhibited form. Activated by factor B (CFB), which displaces the self-inhibition loop. Associates with CFB complexed with complement C3b. Serine protease that initiates the alternative pathway of the complement system, a cascade of proteins that leads to phagocytosis and breakdown of pathogens and signaling that strengthens the adaptive immune system. In contrast to other complement pathways (classical, lectin and GZMK) that are directly activated by pathogens or antigen-antibody complexes, the alternative complement pathway is initiated by the spontaneous hydrolysis of complement C3. The alternative complement pathway acts as an amplification loop that enhances complement activation by mediating the formation of C3 and C5 convertases. Activated CFD cleaves factor B (CFB) when the latter is complexed with complement C3b, activating the C3 convertase of the alternative pathway. The chain is Complement factor D (CFD) from Sus scrofa (Pig).